A 238-amino-acid polypeptide reads, in one-letter code: Large ribosomal subunit protein uL1 (238 aa).

It belongs to the universal ribosomal protein uL1 family. Part of the 50S ribosomal subunit.

Its function is as follows. Binds directly to 23S rRNA. The L1 stalk is quite mobile in the ribosome, and is involved in E site tRNA release. Functionally, protein L1 is also a translational repressor protein, it controls the translation of the L11 operon by binding to its mRNA. The polypeptide is Large ribosomal subunit protein uL1 (Salinispora arenicola (strain CNS-205)).